The chain runs to 622 residues: FERM domain-containing protein 6 (622 aa).

The FERM domain occupies 16 to 328 (RSVCIFLPND…NSHRLYMNLQ (313 aa)). The disordered stretch occupies residues 364–445 (KRSRASGSSA…SGVESGGKDR (82 aa)). 2 stretches are compositionally biased toward low complexity: residues 384 to 395 (HSTASHSSSHTS) and 425 to 438 (SSMT…TSGV). Ser522 carries the phosphoserine modification. Thr523 is modified (phosphothreonine). A phosphoserine mark is found at Ser525, Ser542, and Ser544.

It localises to the cytoplasm. It is found in the cell membrane. The polypeptide is FERM domain-containing protein 6 (FRMD6) (Homo sapiens (Human)).